The primary structure comprises 513 residues: 2-isopropylmalate synthase (513 aa).

Residues Leu-5–Val-268 enclose the Pyruvate carboxyltransferase domain. Residues Asp-14, His-202, His-204, and Asn-239 each contribute to the Mn(2+) site. Positions Arg-394–Ile-513 are regulatory domain.

The protein belongs to the alpha-IPM synthase/homocitrate synthase family. LeuA type 1 subfamily. As to quaternary structure, homodimer. Mn(2+) serves as cofactor.

The protein resides in the cytoplasm. It catalyses the reaction 3-methyl-2-oxobutanoate + acetyl-CoA + H2O = (2S)-2-isopropylmalate + CoA + H(+). Its pathway is amino-acid biosynthesis; L-leucine biosynthesis; L-leucine from 3-methyl-2-oxobutanoate: step 1/4. In terms of biological role, catalyzes the condensation of the acetyl group of acetyl-CoA with 3-methyl-2-oxobutanoate (2-ketoisovalerate) to form 3-carboxy-3-hydroxy-4-methylpentanoate (2-isopropylmalate). This chain is 2-isopropylmalate synthase, found in Cupriavidus necator (strain ATCC 17699 / DSM 428 / KCTC 22496 / NCIMB 10442 / H16 / Stanier 337) (Ralstonia eutropha).